We begin with the raw amino-acid sequence, 617 residues long: Pyrophosphate--fructose 6-phosphate 1-phosphotransferase subunit alpha 2 (617 aa).

It belongs to the phosphofructokinase type A (PFKA) family. PPi-dependent PFK group II subfamily. Clade 'Long' sub-subfamily. In terms of assembly, tetramer of two alpha (regulatory) and two beta (catalytic) chains. Expressed in roots and specific parts such as the trichomes of leaves, cotyledon veins, as well as in stamen and gynoecium of flowers.

The protein resides in the cytoplasm. Its pathway is carbohydrate degradation; glycolysis; D-glyceraldehyde 3-phosphate and glycerone phosphate from D-glucose: step 3/4. Allosterically activated by fructose 2,6-bisphosphate. Regulatory subunit of pyrophosphate--fructose 6-phosphate 1-phosphotransferase. This is Pyrophosphate--fructose 6-phosphate 1-phosphotransferase subunit alpha 2 from Arabidopsis thaliana (Mouse-ear cress).